The following is a 385-amino-acid chain: Succinyl-diaminopimelate desuccinylase (385 aa).

Residue His-73 participates in Zn(2+) binding. Asp-75 is an active-site residue. Residue Asp-106 coordinates Zn(2+). The active-site Proton acceptor is Glu-141. Zn(2+) is bound by residues Glu-142, Glu-170, and His-359.

This sequence belongs to the peptidase M20A family. DapE subfamily. As to quaternary structure, homodimer. Zn(2+) serves as cofactor. Co(2+) is required as a cofactor.

The enzyme catalyses N-succinyl-(2S,6S)-2,6-diaminopimelate + H2O = (2S,6S)-2,6-diaminopimelate + succinate. It participates in amino-acid biosynthesis; L-lysine biosynthesis via DAP pathway; LL-2,6-diaminopimelate from (S)-tetrahydrodipicolinate (succinylase route): step 3/3. Functionally, catalyzes the hydrolysis of N-succinyl-L,L-diaminopimelic acid (SDAP), forming succinate and LL-2,6-diaminopimelate (DAP), an intermediate involved in the bacterial biosynthesis of lysine and meso-diaminopimelic acid, an essential component of bacterial cell walls. The polypeptide is Succinyl-diaminopimelate desuccinylase (Methylorubrum extorquens (strain PA1) (Methylobacterium extorquens)).